We begin with the raw amino-acid sequence, 370 residues long: Aldo-keto reductase NECHADRAFT_45914 (370 aa).

Asp78 is a binding site for NADP(+). The active-site Proton donor is the Tyr83. His174 is a substrate binding site. Residues 204–205 (SS), Gln230, 259–269 (APLASGRLARR), and 333–341 (STVQRIEEA) contribute to the NADP(+) site.

Belongs to the aldo/keto reductase family.

Its pathway is secondary metabolite biosynthesis. Functionally, aldo-keto reductase; part of the gene cluster that mediates the biosynthesis of sansalvamide, a cyclic pentadepsipeptide that shows promising results as potential anti-cancer drug. The nonribosmal peptide synthetase NRPS30 produces sansalvamide by incorporating successively one phenylalanine, one leucine, one alpha-hydroxyisocaproic acid (HICA), one valine and one leucine before sansalvamide is released from by cyclization by the terminal C domain of NRPS30. The HICA residue is probably provided by reduction of alpha-ketoisocaproate by the cluster-specific aldo-keto reductase (NECHADRAFT_45914). This Fusarium vanettenii (strain ATCC MYA-4622 / CBS 123669 / FGSC 9596 / NRRL 45880 / 77-13-4) (Fusarium solani subsp. pisi) protein is Aldo-keto reductase NECHADRAFT_45914.